Reading from the N-terminus, the 131-residue chain is Holo-[acyl-carrier-protein] synthase (131 aa).

Aspartate 8 and glutamate 59 together coordinate Mg(2+).

The protein belongs to the P-Pant transferase superfamily. AcpS family. The cofactor is Mg(2+).

The protein resides in the cytoplasm. It catalyses the reaction apo-[ACP] + CoA = holo-[ACP] + adenosine 3',5'-bisphosphate + H(+). Its function is as follows. Transfers the 4'-phosphopantetheine moiety from coenzyme A to a Ser of acyl-carrier-protein. The chain is Holo-[acyl-carrier-protein] synthase from Rickettsia massiliae (strain Mtu5).